Reading from the N-terminus, the 195-residue chain is Imidazole glycerol phosphate synthase subunit HisH 2 (195 aa).

The region spanning 2 to 195 (KIIIIDTACA…LISNFIKDIG (194 aa)) is the Glutamine amidotransferase type-1 domain. Cysteine 77 functions as the Nucleophile in the catalytic mechanism. Catalysis depends on residues histidine 175 and glutamate 177.

Heterodimer of HisH and HisF.

It localises to the cytoplasm. It carries out the reaction 5-[(5-phospho-1-deoxy-D-ribulos-1-ylimino)methylamino]-1-(5-phospho-beta-D-ribosyl)imidazole-4-carboxamide + L-glutamine = D-erythro-1-(imidazol-4-yl)glycerol 3-phosphate + 5-amino-1-(5-phospho-beta-D-ribosyl)imidazole-4-carboxamide + L-glutamate + H(+). It catalyses the reaction L-glutamine + H2O = L-glutamate + NH4(+). Its pathway is amino-acid biosynthesis; L-histidine biosynthesis; L-histidine from 5-phospho-alpha-D-ribose 1-diphosphate: step 5/9. IGPS catalyzes the conversion of PRFAR and glutamine to IGP, AICAR and glutamate. The HisH subunit provides the glutamine amidotransferase activity that produces the ammonia necessary to HisF for the synthesis of IGP and AICAR. The chain is Imidazole glycerol phosphate synthase subunit HisH 2 (hisH2) from Campylobacter jejuni subsp. jejuni serotype O:2 (strain ATCC 700819 / NCTC 11168).